The chain runs to 317 residues: Probable deoxyhypusine synthase (317 aa).

The active-site Nucleophile is K285.

It belongs to the deoxyhypusine synthase family. NAD(+) serves as cofactor.

It carries out the reaction [eIF5A protein]-L-lysine + spermidine = [eIF5A protein]-deoxyhypusine + propane-1,3-diamine. The protein operates within protein modification; eIF5A hypusination. Catalyzes the NAD-dependent oxidative cleavage of spermidine and the subsequent transfer of the butylamine moiety of spermidine to the epsilon-amino group of a specific lysine residue of the eIF-5A precursor protein to form the intermediate deoxyhypusine residue. The polypeptide is Probable deoxyhypusine synthase (dys) (Methanosarcina thermophila).